The chain runs to 65 residues: Large ribosomal subunit protein bL33c (65 aa).

It belongs to the bacterial ribosomal protein bL33 family.

It localises to the plastid. It is found in the chloroplast. This is Large ribosomal subunit protein bL33c from Psilotum nudum (Whisk fern).